A 556-amino-acid polypeptide reads, in one-letter code: Small ribosomal subunit protein bS1 (556 aa).

6 S1 motif domains span residues 35–105 (TIKE…ISQQ), 120–183 (NAII…ISRK), 204–272 (TEPV…LSIK), 289–359 (GYAI…VSLK), 377–444 (DVLE…LSAK), and 461–525 (DSVI…ASVH).

Belongs to the bacterial ribosomal protein bS1 family.

Functionally, binds mRNA; thus facilitating recognition of the initiation point. It is needed to translate mRNA with a short Shine-Dalgarno (SD) purine-rich sequence. The polypeptide is Small ribosomal subunit protein bS1 (rpsA) (Helicobacter pylori (strain ATCC 700392 / 26695) (Campylobacter pylori)).